The sequence spans 82 residues: Turripeptide Gsg9.1 (82 aa).

The signal sequence occupies residues 1-23 (MMAKLMITVMTVFFLSLQQGADG). Positions 24–46 (LFERWRKNQMAASRIMGNLITAR) are excised as a propeptide. Residues P49 and P50 each carry the 4-hydroxyproline modification. 3 disulfides stabilise this stretch: C53/C68, C58/C72, and C64/C79. A 4-carboxyglutamate mark is found at E60 and E63.

This sequence belongs to the Pg turripeptide superfamily. In terms of tissue distribution, expressed by the venom duct.

The protein resides in the secreted. The sequence is that of Turripeptide Gsg9.1 from Gemmula sogodensis (Gem-turris).